We begin with the raw amino-acid sequence, 33 residues long: Neurotoxin Nk-3FTx (33 aa).

Intrachain disulfides connect cysteine 3-cysteine 24 and cysteine 6-cysteine 11.

In terms of tissue distribution, expressed by the venom gland.

Its subcellular location is the secreted. Its function is as follows. Possible voltage-gated potassium channel (Kv) blocker. Decreases amplitude of compound action potential and conduction velocity in toad sciatic nerve. Has only mild anticoagulant activity even at a concentration of 5ug/ml. Shows no cytotoxicity towards human cell lines. The sequence is that of Neurotoxin Nk-3FTx from Naja kaouthia (Monocled cobra).